The chain runs to 159 residues: Sumo-conjugating enzyme ubc9 (159 aa).

Positions 4-157 constitute a UBC core domain; the sequence is ISSARLSEER…VKAQSKVYPP (154 aa). The active-site Glycyl thioester intermediate is the cysteine 93.

This sequence belongs to the ubiquitin-conjugating enzyme family.

The protein localises to the nucleus. Its pathway is protein modification; protein sumoylation. Accepts the ubiquitin-like protein sumo from the E1 complex and catalyzes its covalent attachment to other proteins with the help of an E3 ligase. This Dictyostelium discoideum (Social amoeba) protein is Sumo-conjugating enzyme ubc9 (ubc9).